The chain runs to 216 residues: Vacuolar iron transporter homolog 4 (216 aa).

Residues 1-29 (MAATNGDAELTVAEEAKEEEEATDDGGGG) are disordered. The Cytoplasmic segment spans residues 1 to 36 (MAATNGDAELTVAEEAKEEEEATDDGGGGVSSQWLR). A helical transmembrane segment spans residues 37–57 (AAVLGASDGLVSTAALMLGIG). The Vacuolar portion of the chain corresponds to 58–65 (AARPADAR). Residues 66–86 (AVLLSGLAGLVAGACSMAIGE) form a helical membrane-spanning segment. The Cytoplasmic segment spans residues 87 to 134 (YVSVHVQLDVELADLERRRRRGGPAPAGLGLHAAAAAVSRPGQAAAAS). The helical transmembrane segment at 135 to 155 (ALSFAAGAALPLLAAWFVAGA) threads the bilayer. Residues 156 to 157 (YR) are Vacuolar-facing. A helical transmembrane segment spans residues 158-178 (VRVVVVVATASLALAAFGAAG). Residues 179–190 (ARLGRAPGGRAG) lie on the Cytoplasmic side of the membrane. Residues 191-211 (LRVVVGGLLAMAATYGVMKLF) traverse the membrane as a helical segment. Residues 212-216 (RTHGV) lie on the Vacuolar side of the membrane.

Belongs to the CCC1 family.

The protein resides in the vacuole membrane. The enzyme catalyses Fe(2+)(in) = Fe(2+)(out). Functionally, probable vacuolar iron transporter that may be involved in the regulation of iron distribution throughout the plant. In Oryza sativa subsp. japonica (Rice), this protein is Vacuolar iron transporter homolog 4.